The sequence spans 271 residues: Shikimate dehydrogenase-like protein HI_0607 (271 aa).

Catalysis depends on Lys-67, which acts as the Proton donor/acceptor. Position 103 (Asp-103) interacts with substrate. NADP(+) contacts are provided by residues 126–130 (GSGGM), Lys-154, and Ser-184.

It belongs to the shikimate dehydrogenase-like family. In terms of assembly, homodimer.

The catalysed reaction is shikimate + NADP(+) = 3-dehydroshikimate + NADPH + H(+). Functionally, in vitro, is able to catalyze the NADP(+)-dependent oxidation of shikimate to 3-dehydroshikimate. However, has much lower activity than classical shikimate dehydrogenases AroE, indicating that shikimate may not be the biological substrate. Cannot utilize NAD(+) instead of NADP(+). Is not able to catalyze the oxidation of quinate. In Haemophilus influenzae (strain ATCC 51907 / DSM 11121 / KW20 / Rd), this protein is Shikimate dehydrogenase-like protein HI_0607.